Consider the following 776-residue polypeptide: Endonuclease MutS2 (776 aa).

Gly330–Thr337 lines the ATP pocket. Residues Leu701–Lys776 form the Smr domain.

This sequence belongs to the DNA mismatch repair MutS family. MutS2 subfamily. In terms of assembly, homodimer. Binds to stalled ribosomes, contacting rRNA.

Its function is as follows. Endonuclease that is involved in the suppression of homologous recombination and thus may have a key role in the control of bacterial genetic diversity. Acts as a ribosome collision sensor, splitting the ribosome into its 2 subunits. Detects stalled/collided 70S ribosomes which it binds and splits by an ATP-hydrolysis driven conformational change. Acts upstream of the ribosome quality control system (RQC), a ribosome-associated complex that mediates the extraction of incompletely synthesized nascent chains from stalled ribosomes and their subsequent degradation. Probably generates substrates for RQC. This is Endonuclease MutS2 from Lactococcus lactis subsp. cremoris (strain SK11).